Consider the following 320-residue polypeptide: Malate dehydrogenase (320 aa).

NAD(+) contacts are provided by residues 10-15 and Asp-34; that span reads GAGQIG. Substrate contacts are provided by Arg-83 and Arg-89. Residues Asn-96 and 119-121 contribute to the NAD(+) site; that span reads ITN. The substrate site is built by Asn-121 and Arg-152. The active-site Proton acceptor is His-176.

It belongs to the LDH/MDH superfamily. MDH type 3 family.

It catalyses the reaction (S)-malate + NAD(+) = oxaloacetate + NADH + H(+). Catalyzes the reversible oxidation of malate to oxaloacetate. This chain is Malate dehydrogenase, found in Cereibacter sphaeroides (strain ATCC 17029 / ATH 2.4.9) (Rhodobacter sphaeroides).